The sequence spans 921 residues: Valine--tRNA ligase (921 aa).

The 'HIGH' region motif lies at 40-50 (PNVTGSLHMGH). A 'KMSKS' region motif is present at residues 522 to 526 (KMSKS). An ATP-binding site is contributed by K525. Residues 849–921 (MADLIDKEAE…LQHKNRIESL (73 aa)) are a coiled coil.

It belongs to the class-I aminoacyl-tRNA synthetase family. ValS type 1 subfamily. As to quaternary structure, monomer.

It localises to the cytoplasm. It catalyses the reaction tRNA(Val) + L-valine + ATP = L-valyl-tRNA(Val) + AMP + diphosphate. Its function is as follows. Catalyzes the attachment of valine to tRNA(Val). As ValRS can inadvertently accommodate and process structurally similar amino acids such as threonine, to avoid such errors, it has a 'posttransfer' editing activity that hydrolyzes mischarged Thr-tRNA(Val) in a tRNA-dependent manner. This is Valine--tRNA ligase from Legionella pneumophila (strain Paris).